Consider the following 414-residue polypeptide: Nucleoporin NUP42 (414 aa).

The segment at 1 to 25 (MPVCNFFLQGRCRYGDTCWNEHPTG) adopts a C3H1-type zinc-finger fold. Disordered stretches follow at residues 24-73 (TGGR…RGAA) and 200-221 (PPASAPGFGSPGPGFGSATSGF). 17 FG repeats span residues 43–44 (FG), 207–208 (FG), 214–215 (FG), 221–222 (FG), 233–234 (FG), 238–239 (FG), 257–258 (FG), 268–269 (FG), 280–281 (FG), 306–307 (FG), 325–326 (FG), 329–330 (FG), 335–336 (FG), 341–342 (FG), 347–348 (FG), 351–352 (FG), and 362–363 (FG).

Probable component of the nuclear pore complex (NPC).

The protein resides in the nucleus. It localises to the nuclear pore complex. It is found in the nucleus membrane. Its function is as follows. Required for the export of mRNAs containing poly(A) tails from the nucleus into the cytoplasm. The polypeptide is Nucleoporin NUP42 (nup42) (Danio rerio (Zebrafish)).